The primary structure comprises 75 residues: MLTAGVDHQDLAKRGESLIRQSSNRYLTTVRIAFRAKQRRFDDFDGLLEESSVKPVQRAIVELSDEQDQPDLLPG.

Belongs to the RNA polymerase subunit omega family. In cyanobacteria the RNAP catalytic core is composed of 2 alpha, 1 beta, 1 beta', 1 gamma and 1 omega subunit. When a sigma factor is associated with the core the holoenzyme is formed, which can initiate transcription.

It catalyses the reaction RNA(n) + a ribonucleoside 5'-triphosphate = RNA(n+1) + diphosphate. In terms of biological role, promotes RNA polymerase assembly. Latches the N- and C-terminal regions of the beta' subunit thereby facilitating its interaction with the beta and alpha subunits. The protein is DNA-directed RNA polymerase subunit omega of Synechococcus sp. (strain WH7803).